A 208-amino-acid chain; its full sequence is Protein GrpE (208 aa).

A compositionally biased stretch (basic and acidic residues) spans 1–12 (MTNKDESVKKNT). A disordered region spans residues 1–51 (MTNKDESVKKNTESTVEETNVKQNIDDSVEQAEESKGHLQDEAIEETSDEN). Positions 13 to 23 (ESTVEETNVKQ) are enriched in polar residues. Residues 42 to 51 (EAIEETSDEN) show a composition bias toward acidic residues.

The protein belongs to the GrpE family. Homodimer.

The protein localises to the cytoplasm. In terms of biological role, participates actively in the response to hyperosmotic and heat shock by preventing the aggregation of stress-denatured proteins, in association with DnaK and GrpE. It is the nucleotide exchange factor for DnaK and may function as a thermosensor. Unfolded proteins bind initially to DnaJ; upon interaction with the DnaJ-bound protein, DnaK hydrolyzes its bound ATP, resulting in the formation of a stable complex. GrpE releases ADP from DnaK; ATP binding to DnaK triggers the release of the substrate protein, thus completing the reaction cycle. Several rounds of ATP-dependent interactions between DnaJ, DnaK and GrpE are required for fully efficient folding. The protein is Protein GrpE of Staphylococcus aureus (strain COL).